Here is a 310-residue protein sequence, read N- to C-terminus: MAGMQLDEIIEYLRYSKHIPEETIYELCLKCQELLVNESNVTHVDTPVTICGDIHGQLHDLLTLFEKSEGIEKNRFIFLGDFVDRGFYSLESFLLLLCYKLRYPDRITLIRGNHETRQITKVYGFYDEVIRKYGNSNVWRYCCEVFDYLSLGAIINGQIFCVHGGLSPDVMTVDEIRSIDRKQEVPHEGAMCDLLWSDPDEVDTWSLSPRGAGFLFGKNEVDQFLHRNDISLIARAHQLVMEGYKEMFDGGLVTVWSAPNYCYRCGNVAAVLRIDDDLSRNYTIFEAVPAQDNRGNAIIPTKKPQMDYFL.

The Mn(2+) site is built by D53, H55, D81, and N113. The Proton donor role is filled by H114. The Mn(2+) site is built by H163 and H237. Position 310 is a leucine methyl ester (L310).

This sequence belongs to the PPP phosphatase family. PP-4 (PP-X) subfamily. In terms of assembly, catalytic subunit of the histone H2A phosphatase complex (HTP-C) containing PPH3, PSY2 and PSY4. It depends on Mn(2+) as a cofactor.

Its subcellular location is the cytoplasm. The protein resides in the nucleus. The enzyme catalyses O-phospho-L-seryl-[protein] + H2O = L-seryl-[protein] + phosphate. It catalyses the reaction O-phospho-L-threonyl-[protein] + H2O = L-threonyl-[protein] + phosphate. Involved in the dephosphorylation and activation of the transcription factor GLN3 in response to nutrient availability. Forms the histone H2A phosphatase complex in association with the regulatory subunits PSY2 and PSY4, which dephosphorylates H2AS128ph (gamma-H2A) that has been displaced from sites of DNA lesions in the double-stranded DNA break repair process. Dephosphorylation is necessary for efficient recovery from the DNA damage checkpoint. The protein is Serine/threonine-protein phosphatase 4 catalytic subunit (PPH3) of Eremothecium gossypii (strain ATCC 10895 / CBS 109.51 / FGSC 9923 / NRRL Y-1056) (Yeast).